We begin with the raw amino-acid sequence, 247 residues long: ATP synthase subunit a, chloroplastic (247 aa).

Transmembrane regions (helical) follow at residues Gln38–Val58, Val95–Leu115, Ile134–Ser154, Leu199–Leu219, and Gly220–Gly240.

Belongs to the ATPase A chain family. As to quaternary structure, F-type ATPases have 2 components, CF(1) - the catalytic core - and CF(0) - the membrane proton channel. CF(1) has five subunits: alpha(3), beta(3), gamma(1), delta(1), epsilon(1). CF(0) has four main subunits: a, b, b' and c.

The protein localises to the plastid. Its subcellular location is the chloroplast thylakoid membrane. Key component of the proton channel; it plays a direct role in the translocation of protons across the membrane. The polypeptide is ATP synthase subunit a, chloroplastic (Lactuca sativa (Garden lettuce)).